Reading from the N-terminus, the 208-residue chain is Peptidyl-prolyl cis-trans isomerase FKBP13, chloroplastic (208 aa).

Cystine bridges form between Cys-84–Cys-96 and Cys-185–Cys-190. A PPIase FKBP-type domain is found at 109–208 (GQLIKAHYVG…LFDIEYIGKA (100 aa)).

It belongs to the FKBP-type PPIase family. Interacts in vitro with LTO1. The precursor, but not the mature form of the protein, interacts with the Rieske protein. In terms of tissue distribution, expressed in stems, leaves and developing flower buds, but not in roots.

Its subcellular location is the plastid. It is found in the chloroplast thylakoid lumen. It catalyses the reaction [protein]-peptidylproline (omega=180) = [protein]-peptidylproline (omega=0). PPIase activity is optimal in oxidized form (S-S) and minimal in reduced form (SH). Reduction of the oxidized form is mediated by thioredoxin (TRX-M). Functionally, PPIases accelerate the folding of proteins. It catalyzes the cis-trans isomerization of proline imidic peptide bonds in oligopeptides. Responsive of the major PPIase activity in the chloroplast thylakoid lumen. Regulates the accumulation of Rieske protein, an essential component of the photosynthetic electron transport chain. This chain is Peptidyl-prolyl cis-trans isomerase FKBP13, chloroplastic, found in Arabidopsis thaliana (Mouse-ear cress).